A 2066-amino-acid polypeptide reads, in one-letter code: Kinesin-like protein KIN-12C (2066 aa).

Disordered regions lie at residues 1-41 and 59-116; these read MSRN…SQIQ and RAQH…RVSL. Positions 20-33 are enriched in low complexity; the sequence is SLSLFSPSRPPLNS. Over residues 67 to 76 the composition is skewed to basic and acidic residues; it reads GPEKKFEVLE. A compositionally biased stretch (polar residues) spans 99 to 109; that stretch reads EPNSAQSTPTR. Residues 168 to 505 enclose the Kinesin motor domain; it reads NVQVLIRLRP…LKFAQRAKLI (338 aa). 249–256 is an ATP binding site; sequence GQTGSGKT. 3 microtubules-binding regions span residues 375-379, 406-412, and 454-458; these read SSRSH, VDLAGSE, and HVPYR. Coiled-coil stretches lie at residues 1521–1618 and 1650–1772; these read DLKT…VDEI and KIYA…EILL. Disordered stretches follow at residues 1803 to 1823 and 2043 to 2066; these read SAAE…RGSS and KYRK…TRYR. Positions 1905 to 2051 form a coiled coil; the sequence is VQRVVEKAQQ…AKYRKTSNNH (147 aa). Over residues 2047–2066 the composition is skewed to polar residues; sequence TSNNHPSTRTQGQSSGTRYR.

Belongs to the TRAFAC class myosin-kinesin ATPase superfamily. Kinesin family. KIN-12 subfamily. Interacts with TAN. Interacts with RANGAP1. In terms of tissue distribution, expressed in tissues enriched in dividing cells, such as root meristems, root primordia, and leaf primordia/young leaves.

The protein resides in the cytoplasm. It is found in the cytoskeleton. Its subcellular location is the phragmoplast. Functionally, involved in the spatial control of cytokinesis by a proper phragmoplast guidance. Localizes TAN to the cortical division sites (CDS) during cytokinesis via direct binding. This Arabidopsis thaliana (Mouse-ear cress) protein is Kinesin-like protein KIN-12C.